The following is a 210-amino-acid chain: MTDLSQQFDRLIAQTDLNVSELQKEQLLGYVALLHKWNKAYNLTSVRNPSEMVIKHILDSIVVSPKLSGERFIDVGTGPGLPGIPLAIMNPEKSFTLLDSLGKRIRFIKQVIHELKITNVTPIQSRVEEFQPEEKFDAVLSRAFASMTDMVNWCHHLPKEEDGVFLALKGIYSEEEANDLPEWCSVKNVATLIVPELEGERHLVTLAGKK.

Residues Gly76, Leu81, 127–128, and Arg142 each bind S-adenosyl-L-methionine; that span reads VE.

This sequence belongs to the methyltransferase superfamily. RNA methyltransferase RsmG family.

It localises to the cytoplasm. The enzyme catalyses guanosine(527) in 16S rRNA + S-adenosyl-L-methionine = N(7)-methylguanosine(527) in 16S rRNA + S-adenosyl-L-homocysteine. In terms of biological role, specifically methylates the N7 position of guanine in position 527 of 16S rRNA. The sequence is that of Ribosomal RNA small subunit methyltransferase G from Aliivibrio fischeri (strain ATCC 700601 / ES114) (Vibrio fischeri).